A 157-amino-acid polypeptide reads, in one-letter code: Beta-defensin 125 (157 aa).

An N-terminal signal peptide occupies residues 1–20 (MNLLMLTFIICGLLTQVTKG). 3 disulfide bridges follow: C27/C55, C35/C49, and C39/C56. The interval 109–157 (GETITPETNTPETTMPPSETTSSKTTMPPSETATSETMPPPSQTALTHN) is disordered. The span at 110 to 140 (ETITPETNTPETTMPPSETTSSKTTMPPSET) shows a compositional bias: low complexity. Over residues 141–157 (ATSETMPPPSQTALTHN) the composition is skewed to polar residues.

This sequence belongs to the beta-defensin family.

It is found in the secreted. In terms of biological role, has antibacterial activity. This is Beta-defensin 125 (DEFB125) from Pongo pygmaeus (Bornean orangutan).